We begin with the raw amino-acid sequence, 181 residues long: Protein Syd (181 aa).

Belongs to the Syd family.

The protein resides in the cell inner membrane. In terms of biological role, interacts with the SecY protein in vivo. May bind preferentially to an uncomplexed state of SecY, thus functioning either as a chelating agent for excess SecY in the cell or as a regulatory factor that negatively controls the translocase function. This chain is Protein Syd, found in Cronobacter sakazakii (strain ATCC BAA-894) (Enterobacter sakazakii).